The chain runs to 169 residues: Interleukin-25 (169 aa).

An N-terminal signal peptide occupies residues 1–16; the sequence is MYQAVAFLAMIVGTHT. The interval 47-70 is disordered; sequence SSASVSPPEPLSHTHHAESCRASK. Residues 61-70 show a composition bias toward basic and acidic residues; the sequence is HHAESCRASK. 2 disulfide bridges follow: Cys-102/Cys-160 and Cys-107/Cys-162. Asn-128 is a glycosylation site (N-linked (GlcNAc...) asparagine).

It belongs to the IL-17 family.

Its subcellular location is the secreted. Cytokine produced by various cells such as eosinophils, T-helper type 2 (Th2) cells or epithelial cells that plays a role in internal safety of adaptive immune responses by regulating cytokine production. Promotes and augments T-helper type 2 responses locally or systemically. Exerts its activity via its receptor composed of IL17RA and IL17RB for signal transduction. In turn, stimulates the JAK2-STAT5A pathway and promotes the secretion of type-2 associated cytokines including IL4, IL9 and IL13. Also induces the release of IL8, and IL6 from eosinophils through the combined activation of MAPK and NF-kappa-B pathways. Inhibits the differentiation of T-helper (Th17) cells via the production of IL4, IL5 and IL13. The polypeptide is Interleukin-25 (Il25) (Mus musculus (Mouse)).